Here is an 87-residue protein sequence, read N- to C-terminus: Acyl-CoA-binding protein (87 aa).

At serine 2 the chain carries N-acetylserine. The ACB domain occupies 2–87; that stretch reads SQAEFEKAAE…VEELKKKYGI (86 aa). The residue at position 8 (lysine 8) is an N6-acetyllysine; alternate. Position 8 is an N6-succinyllysine; alternate (lysine 8). Lysine 14 is an an acyl-CoA binding site. Position 17 is an N6-succinyllysine (lysine 17). Lysine 19 carries the post-translational modification N6-acetyllysine. Tyrosine 29 is modified (phosphotyrosine). An acyl-CoA-binding positions include 29-33, lysine 51, lysine 55, and tyrosine 74; that span reads YSHYK. Lysine 51 carries the post-translational modification N6-acetyllysine. Lysine 55 is subject to N6-acetyllysine; alternate. Position 55 is an N6-succinyllysine; alternate (lysine 55). Lysine 55 carries the post-translational modification N6-(2-hydroxyisobutyryl)lysine; alternate. Lysine 55 bears the N6-malonyllysine; alternate mark. An N6-acetyllysine; alternate modification is found at lysine 77. At lysine 77 the chain carries N6-succinyllysine; alternate.

This sequence belongs to the ACBP family. In terms of assembly, monomer.

It localises to the endoplasmic reticulum. The protein localises to the golgi apparatus. Functionally, binds medium- and long-chain acyl-CoA esters with very high affinity and may function as an intracellular carrier of acyl-CoA esters. It is also able to displace diazepam from the benzodiazepine (BZD) recognition site located on the GABA type A receptor. It is therefore possible that this protein also acts as a neuropeptide to modulate the action of the GABA receptor. In terms of biological role, DBI(32-86) has antibacterial properties. This Sus scrofa (Pig) protein is Acyl-CoA-binding protein (DBI).